The sequence spans 1111 residues: Nuclear migration and anchoring protein unc-84 (1111 aa).

The Nuclear portion of the chain corresponds to 1–509 (MAPATEADNN…LTDKKSSKFS (509 aa)). 2 required for nuclear envelope localization regions span residues 118-244 (YILR…SQTL) and 503-507 (KKSSK). The disordered stretch occupies residues 232–253 (ERASRMTTRSQTLERSRKFDGL). A compositionally biased stretch (basic and acidic residues) spans 243 to 252 (TLERSRKFDG). A helical transmembrane segment spans residues 510–530 (WCQILGLLLALLFAIFLLGFL). Over 531–1111 (TSDNTAIRVK…LRVHGKVVQV (581 aa)) the chain is Perinuclear space. The segment at 912–1111 (QYDKNHLEAI…LRVHGKVVQV (200 aa)) is interaction with zyg-12. Residues 945 to 1109 (GGAVVSTRCS…YRLRVHGKVV (165 aa)) enclose the SUN domain.

As to quaternary structure, component of the unc-83-unc-84 LINC complex which contains at least unc-83 and unc-84. Within the unc-83-unc-84 LINC complex interacts (via C-terminus) with unc-83; the interaction is probably required to recruit unc-83 to the nuclear membrane. Most likely interacts with anc-1; the interaction is probably required to recruit anc-1 to the nuclear envelope. Interacts (via C-terminus) with zyg-12 (via C-terminus); the interaction is direct. May interact with lmn-1; this interaction may be required to complete the connection between the nuclear lamina and the cytoskeleton. In terms of tissue distribution, expressed in all somatic cells. Not expressed in germ cells in the mitotic and transition zones of the gonad. One study shows expression at the beginning of the late pachytene stage in the proximal gonad, but there is no expression in the male germline, suggesting expression is specific to oogenesis in hermaphrodites.

It localises to the nucleus inner membrane. It is found in the cytoplasm. The protein localises to the cytoskeleton. Its function is as follows. Involved in nuclear migration and anchoring in hypodermal precursor cells. Most likely recruits anc-1 to the nuclear envelope where anc-1 functions to tether the nucleus to the actin cytoskeleton. Component of the unc-83-unc-84 LINC (LInker of Nucleoskeleton and Cytoskeleton) complex where it recruits and interacts with unc-83 to form a bridge connecting the nuclear envelope to the cytoskeleton which allows for nuclear transport along microtubules. Its role in nuclear migration may be in association with lamin, lmn-1. Regulates nuclear migrations in one-cell embryos, controlling the posterior migration of the male pronucleus following fertilization. Not required for centrosome attachment to the nucleus. Plays a role in the maintenance of the nuclear envelope architecture in body wall muscle cells. May be involved in DNA damage repair through an association with zyg-12. Potentially has roles in homologous recombination, double strand break repair and meiotic recombination. Specifically, may in part inhibit non-homologous end joining repair, most likely through recruiting fan-1 to the nucleoplasm, to facilitate the repair of DNA cross-links. The polypeptide is Nuclear migration and anchoring protein unc-84 (Caenorhabditis elegans).